Consider the following 213-residue polypeptide: MKKGLFITVEGGEGAGKTTIINLVQEQLATQGYEVIRTREPGGVELAEQIRDLLLHTQGVEMDNRTEALLYAAARREHLIKKIVPALAEGALVLCDRYIDSSLVYQGHARGIGMEEVRAINGFAIETYMPDLTLYFDVEPEIGLERVQKDAVRSWNRLDQETLTFHKRVQEGYKKLLKAEPERIKAIDANRSFAEVFHDTMEEINRMLLSTKD.

An ATP-binding site is contributed by 11–18; that stretch reads GGEGAGKT.

This sequence belongs to the thymidylate kinase family.

The catalysed reaction is dTMP + ATP = dTDP + ADP. Functionally, phosphorylation of dTMP to form dTDP in both de novo and salvage pathways of dTTP synthesis. In Shouchella clausii (strain KSM-K16) (Alkalihalobacillus clausii), this protein is Thymidylate kinase.